Here is a 361-residue protein sequence, read N- to C-terminus: MIGFAPVSTPDAAAEAAARARQDSLTKPRGALGSLEDLSVWVASCQQRCPPRQFERARVVVFAGDHGVARSGVSAYPPEVTAQMVANIDAGGAAINALADVAGATVRVADLAVDADPLSERIGAHKVRRGSGNIATEDALTNDETAAAITAGQQIADEEVDAGADLLIAGDMGIGNTTAAAVLVAALTDAEPVAVVGFGTGIDDAGWARKTAAVRDALFRVRPVLPDPVGLLRCAGGADLAAIAGFCAQAAVRRTPLLLDGVAVTAAALVAERLAPGAHRWWQAGHRSSEPGHGLALAALGLDPIVDLHMRLGEGTGAAVALMVLRAAVAALSSMATFTEAGVSTRSVDGVDRTAPPAVSP.

The active-site Proton acceptor is E314.

This sequence belongs to the CobT family.

It carries out the reaction 5,6-dimethylbenzimidazole + nicotinate beta-D-ribonucleotide = alpha-ribazole 5'-phosphate + nicotinate + H(+). It participates in nucleoside biosynthesis; alpha-ribazole biosynthesis; alpha-ribazole from 5,6-dimethylbenzimidazole: step 1/2. In terms of biological role, catalyzes the synthesis of alpha-ribazole-5'-phosphate from nicotinate mononucleotide (NAMN) and 5,6-dimethylbenzimidazole (DMB). This Mycobacterium bovis (strain BCG / Pasteur 1173P2) protein is Nicotinate-nucleotide--dimethylbenzimidazole phosphoribosyltransferase.